Consider the following 292-residue polypeptide: [LysW]-aminoadipate kinase (292 aa).

Arg-89 and Asn-193 together coordinate substrate.

It belongs to the acetylglutamate kinase family. LysZ subfamily.

The protein localises to the cytoplasm. It carries out the reaction [amino-group carrier protein]-C-terminal-N-(1,4-dicarboxybutan-1-yl)-L-glutamine + ATP = [amino-group carrier protein]-C-terminal-N-(1-carboxy-5-phosphooxy-5-oxopentan-1-yl)-L-glutamine + ADP. It participates in amino-acid biosynthesis; L-lysine biosynthesis via AAA pathway; L-lysine from L-alpha-aminoadipate (Thermus route): step 2/5. In terms of biological role, catalyzes the phosphorylation of LysW-gamma-alpha-aminoadipate. The sequence is that of [LysW]-aminoadipate kinase from Deinococcus radiodurans (strain ATCC 13939 / DSM 20539 / JCM 16871 / CCUG 27074 / LMG 4051 / NBRC 15346 / NCIMB 9279 / VKM B-1422 / R1).